Here is a 163-residue protein sequence, read N- to C-terminus: PTS system fructose-specific EIIB component (163 aa).

Positions 1-163 (MMNIVLARID…FVQILRNVTK (163 aa)) constitute a PTS EIIB type-4 domain. The active-site Pros-phosphohistidine intermediate is the His15. At His15 the chain carries Phosphohistidine; by EIIA.

It localises to the cytoplasm. It carries out the reaction D-fructose(out) + N(pros)-phospho-L-histidyl-[protein] = D-fructose 1-phosphate(in) + L-histidyl-[protein]. In terms of biological role, the phosphoenolpyruvate-dependent sugar phosphotransferase system (sugar PTS), a major carbohydrate active -transport system, catalyzes the phosphorylation of incoming sugar substrates concomitantly with their translocation across the cell membrane. The enzyme II LevDE PTS system is involved in fructose transport. Functionally, levD and LevE act as negative regulators of the levanase operon. They may be involved in a PTS-mediated phosphorylation of a regulator. This Bacillus subtilis (strain 168) protein is PTS system fructose-specific EIIB component.